A 284-amino-acid polypeptide reads, in one-letter code: Bifunctional protein FolD (284 aa).

NADP(+) contacts are provided by residues 163–165 (GRS), Ser188, and Ile229.

It belongs to the tetrahydrofolate dehydrogenase/cyclohydrolase family. In terms of assembly, homodimer.

The catalysed reaction is (6R)-5,10-methylene-5,6,7,8-tetrahydrofolate + NADP(+) = (6R)-5,10-methenyltetrahydrofolate + NADPH. The enzyme catalyses (6R)-5,10-methenyltetrahydrofolate + H2O = (6R)-10-formyltetrahydrofolate + H(+). The protein operates within one-carbon metabolism; tetrahydrofolate interconversion. Catalyzes the oxidation of 5,10-methylenetetrahydrofolate to 5,10-methenyltetrahydrofolate and then the hydrolysis of 5,10-methenyltetrahydrofolate to 10-formyltetrahydrofolate. The polypeptide is Bifunctional protein FolD (Campylobacter hominis (strain ATCC BAA-381 / DSM 21671 / CCUG 45161 / LMG 19568 / NCTC 13146 / CH001A)).